The sequence spans 105 residues: Small ribosomal subunit protein uS10c (105 aa).

The protein belongs to the universal ribosomal protein uS10 family. Part of the 30S ribosomal subunit.

The protein localises to the plastid. It localises to the chloroplast. In terms of biological role, involved in the binding of tRNA to the ribosomes. This is Small ribosomal subunit protein uS10c from Porphyra purpurea (Red seaweed).